A 469-amino-acid polypeptide reads, in one-letter code: Ufm1-specific protease 2 (469 aa).

At Met1 the chain carries N-acetylmethionine. Residues Cys302, Asp426, and His428 contribute to the active site.

The protein belongs to the peptidase C78 family.

Its subcellular location is the endoplasmic reticulum. The protein localises to the cytoplasm. It is found in the nucleus. Thiol-dependent isopeptidase that specifically cleaves UFM1, a ubiquitin-like modifier protein, from conjugated proteins, such as CD274/PD-L1, CYB5R3, DDRGK1, MRE11, RPL26/uL24, TRIP4 and RPL26/uL24. While it is also able to mediate the processing of UFM1 precursors, a prerequisite for conjugation reactions, UFSP2 mainly acts as a protein deUFMylase that mediates deconjugation of UFM1 from target proteins. Mediates deUFMylation of RPL26/uL24, a critical step to release the UFM1 ribosome E3 ligase (UREL) complex during the recycling of 60S ribosome subunits from the endoplasmic reticulum. Catalyzes deUFMylation of TRIP4, regulating intracellular nuclear receptors transactivation and thereby regulate cell proliferation and differentiation. The protein is Ufm1-specific protease 2 of Pongo abelii (Sumatran orangutan).